The primary structure comprises 507 residues: Protein disulfide-isomerase (507 aa).

The first 20 residues, 1–20 (MASMVSFCFLLLFLAFFASS), serve as a signal peptide directing secretion. One can recognise a Thioredoxin 1 domain in the interval 21-144 (FNEIYAEESE…IVDYLKKQSG (124 aa)). Active-site nucleophile residues include C62 and C65. Residues C62 and C65 are joined by a disulfide bond. N181 and N278 each carry an N-linked (GlcNAc...) asparagine glycan. The Thioredoxin 2 domain occupies 365-485 (YRKSEPIPEH…FIEFIEKNRE (121 aa)). Residues C407 and C410 each act as nucleophile in the active site. C407 and C410 are oxidised to a cystine. The interval 484 to 507 (REKSSKKESIVKDDQTDSETKAEL) is disordered. The Prevents secretion from ER motif lies at 504 to 507 (KAEL).

The protein belongs to the protein disulfide isomerase family.

The protein resides in the endoplasmic reticulum lumen. It carries out the reaction Catalyzes the rearrangement of -S-S- bonds in proteins.. Participates in the folding of proteins containing disulfide bonds, may be involved in glycosylation, prolyl hydroxylation and triglyceride transfer. The polypeptide is Protein disulfide-isomerase (PDI) (Datisca glomerata (Durango root)).